The sequence spans 139 residues: Large ribosomal subunit protein uL16c (139 aa).

Belongs to the universal ribosomal protein uL16 family. As to quaternary structure, part of the 50S ribosomal subunit.

It is found in the plastid. Its subcellular location is the chloroplast. The sequence is that of Large ribosomal subunit protein uL16c from Cryptomeria japonica (Japanese cedar).